The primary structure comprises 83 residues: Beta-defensin 19 (83 aa).

The signal sequence occupies residues 1–19 (MRLALLLLAILVATELVVS). 3 disulfides stabilise this stretch: Cys27–Cys54, Cys34–Cys48, and Cys38–Cys55.

Belongs to the beta-defensin family. As to expression, specifically expressed in male gonads (Sertoli cells).

Its subcellular location is the secreted. Has antibacterial activity. This is Beta-defensin 19 (Defb19) from Mus musculus (Mouse).